The sequence spans 75 residues: MLEKAKIDRINELSKKKKAGTLTSAEKVEQDKLRKEYIKSFRTHMKGTIENTTIIDPNGKDVTPHKVKQLRKNKY.

Residues 56–75 (DPNGKDVTPHKVKQLRKNKY) form a disordered region. Positions 65–75 (HKVKQLRKNKY) are enriched in basic residues.

It belongs to the UPF0291 family.

The protein resides in the cytoplasm. The sequence is that of UPF0291 protein lmo1304 from Listeria monocytogenes serovar 1/2a (strain ATCC BAA-679 / EGD-e).